Here is a 219-residue protein sequence, read N- to C-terminus: ATP-dependent Clp protease proteolytic subunit 1 (219 aa).

Serine 113 functions as the Nucleophile in the catalytic mechanism. The active site involves histidine 138.

The protein belongs to the peptidase S14 family. Fourteen ClpP subunits assemble into 2 heptameric rings which stack back to back to give a disk-like structure with a central cavity, resembling the structure of eukaryotic proteasomes.

The protein localises to the cytoplasm. The catalysed reaction is Hydrolysis of proteins to small peptides in the presence of ATP and magnesium. alpha-casein is the usual test substrate. In the absence of ATP, only oligopeptides shorter than five residues are hydrolyzed (such as succinyl-Leu-Tyr-|-NHMec, and Leu-Tyr-Leu-|-Tyr-Trp, in which cleavage of the -Tyr-|-Leu- and -Tyr-|-Trp bonds also occurs).. Cleaves peptides in various proteins in a process that requires ATP hydrolysis. Has a chymotrypsin-like activity. Plays a major role in the degradation of misfolded proteins. Probably partially responsible for degradation of ECF sigma factor SigR prime. This chain is ATP-dependent Clp protease proteolytic subunit 1, found in Streptomyces coelicolor (strain ATCC BAA-471 / A3(2) / M145).